Here is a 530-residue protein sequence, read N- to C-terminus: Pentatricopeptide repeat-containing protein At3g51320 (530 aa).

PPR repeat units follow at residues 82–116, 117–151, 152–182, 183–217, 218–248, 249–283, 284–314, 315–349, 350–380, and 386–420; these read KLYC…GFVP, DSYT…GCDQ, VLPV…IPKR, DIVS…NIIS, WNIM…GFQG, NEST…FLNS, SVVI…LSIR, NKVT…MLRP, DEVT…MVDE, and NFGH…DVTP. The type E motif stretch occupies residues 424–499; that stretch reads KWANLLSSSR…IPGCGLVDLK (76 aa).

Belongs to the PPR family. PCMP-E subfamily.

The polypeptide is Pentatricopeptide repeat-containing protein At3g51320 (Arabidopsis thaliana (Mouse-ear cress)).